The sequence spans 295 residues: Septu protein PtuB (295 aa).

Functionally, component of antiviral defense system Septu type II, composed of PtuA and PtuB. Expression of Septu type II in B.subtilis (strain BEST7003) confers resistance to phages SBSphiC and SpBeta. May be a nuclease. The sequence is that of Septu protein PtuB from Bacillus mycoides (strain KBAB4) (Bacillus weihenstephanensis).